A 172-amino-acid polypeptide reads, in one-letter code: Scytalone dehydratase-like protein Arp1 (172 aa).

Tyr49 contacts substrate. Active-site residues include His84 and His109. Asn130 contributes to the substrate binding site.

Belongs to the scytalone dehydratase family. As to quaternary structure, homotrimer. Each subunit contains an active site, located in the central part of the hydrophobic core of the monomer, which functions independently.

In terms of biological role, scytalone dehydratase-like protein; part of the Pks2 gene cluster that mediates the formation of infectious structures (appressoria), enabling these fungi to kill insects faster. The product of the Pks2 gene cluster is different from the one of Pks1 and has still not been identified. The chain is Scytalone dehydratase-like protein Arp1 from Metarhizium robertsii (strain ARSEF 23 / ATCC MYA-3075) (Metarhizium anisopliae (strain ARSEF 23)).